A 1032-amino-acid polypeptide reads, in one-letter code: Importin beta-like protein KAP120 (1032 aa).

Alanine 2 is modified (N-acetylalanine). The 73-residue stretch at 31-103 folds into the Importin N-terminal domain; that stretch reads AEQQLRQWET…RGRLFEMIDE (73 aa).

Belongs to the importin beta family. Interacts with GTP-bound GSP1 and RFP1. Associates with the nuclear pore complex.

Its subcellular location is the cytoplasm. The protein localises to the nucleus. Functionally, functions in nuclear protein import as nuclear transport receptor. Serves as receptor for nuclear localization signals (NLS) in cargo substrates. Thought to mediate docking of the importin/substrate complex to the nuclear pore complex (NPC) through binding to nucleoporin and the complex is subsequently translocated through the pore by an energy requiring, RAN-dependent mechanism. Required for nuclear import of Ho endonuclease and RFP1, and involved in rRNA-processing and assembly or export of 60S ribosomal subunits. This chain is Importin beta-like protein KAP120 (KAP120), found in Saccharomyces cerevisiae (strain ATCC 204508 / S288c) (Baker's yeast).